The sequence spans 424 residues: MLWQTFFSSLLLLSLLFGCNGDESLPEVTDSEEAPMDKREREALYSAIQGFVGDSWNGSALYPDPCGWTPIQGVSCDIYNDLWYVTDLSLGLIYENSLPCSSSLQIRPELFELKHLRSLSFFNCFISPMVIAKEELWTNFASNLESLEFRSNPGLIGELPETIGNLTKLKSLVVLENGFSGELPASICNLKRLKRLVFAGNSFAGMIPNCFKGLKELLILDLSRNSFSGTLPTSFGDLVSLLKLDLSNNLLEGNLPQELGFLKNLTLLDLRNNRFSGGLSKNIENIQSLTELVLSNNPMGEEDMVGTNWGKMSNLVVLDLSKMGLRGEIPTSLTNLKRLRFLGLNNNNLTGFVPSKKLEALPCLGALYINGNNLTGELRFSTKFYEKMGRRFKASKNPNLCQPLEMVMSESHKHLSPLGVKPCT.

The signal sequence occupies residues 1–21 (MLWQTFFSSLLLLSLLFGCNG). LRR repeat units lie at residues 141-166 (ASNLESLEFRSNPGLIGELPETIGNL), 167-190 (TKLKSLVVLENGFSGELPASICNL), 191-213 (KRLKRLVFAGNSFAGMIPNCFKG), 214-237 (LKELLILDLSRNSFSGTLPTSFGD), 238-263 (LVSLLKLDLSNNLLEGNLPQELGFLK), 265-286 (LTLLDLRNNRFSGGLSKNIENI), 287-311 (QSLTELVLSNNPMGEEDMVGTNWGK), 312-336 (MSNLVVLDLSKMGLRGEIPTSLTNL), 337-360 (KRLRFLGLNNNNLTGFVPSKKLEA), and 362-387 (PCLGALYINGNNLTGELRFSTKFYEK).

The protein localises to the cell membrane. Required for growth promotion and enhanced seed production mediated by the endophytic fungus Piriformospora indica. This is Piriformospora indica-insensitive protein 2 (PII-2) from Arabidopsis thaliana (Mouse-ear cress).